A 436-amino-acid chain; its full sequence is AMSH-like protease (436 aa).

Met1 is subject to N-acetylmethionine. Residues Ser25 and Ser242 each carry the phosphoserine modification. Residues 269-397 (VVLSRDLCHK…IFRLTNAGML (129 aa)) enclose the MPN domain. 7 residues coordinate Zn(2+): His347, His349, Asp360, His362, Cys402, His408, and His410. Residues 347 to 360 (HTHPTQTAFLSSVD) carry the JAMM motif motif.

This sequence belongs to the peptidase M67C family. The cofactor is Zn(2+). As to expression, ubiquitously expressed. Isoform 1 is widely expressed while isoform 2 is testis-specific.

Functionally, zinc metalloprotease that specifically cleaves 'Lys-63'-linked polyubiquitin chains. Acts as a positive regulator of the TORC1 signaling pathway by mediating 'Lys-63'-linked deubiquitination of SESN2, thereby inhibiting SESN2-interaction with the GATOR2 complex. Does not cleave 'Lys-48'-linked polyubiquitin chains. This is AMSH-like protease (Stambpl1) from Mus musculus (Mouse).